Here is a 122-residue protein sequence, read N- to C-terminus: MIQAQTYLNVADNSGARELMCIRIVGASNPRYAHIGDVIVAVIKEAVPNMPLERSEVIRAVIVRTCKELKRDNGIIIRYDDNAAVVIDPEGNPKGTRVFGSIAGELRHLNFTKIVSLAPEVF.

The protein belongs to the universal ribosomal protein uL14 family. As to quaternary structure, part of the 50S ribosomal subunit.

It localises to the plastid. Its subcellular location is the chloroplast. Functionally, binds to 23S rRNA. The protein is Large ribosomal subunit protein uL14c of Amborella trichopoda.